The sequence spans 200 residues: Pyridoxal 5'-phosphate synthase subunit PdxT (200 aa).

Residue 52–54 participates in L-glutamine binding; sequence GES. Catalysis depends on cysteine 84, which acts as the Nucleophile. Residues arginine 116 and 145–146 each bind L-glutamine; that span reads IR. Catalysis depends on charge relay system residues histidine 181 and glutamate 183.

The protein belongs to the glutaminase PdxT/SNO family. As to quaternary structure, in the presence of PdxS, forms a dodecamer of heterodimers. Only shows activity in the heterodimer.

The catalysed reaction is aldehydo-D-ribose 5-phosphate + D-glyceraldehyde 3-phosphate + L-glutamine = pyridoxal 5'-phosphate + L-glutamate + phosphate + 3 H2O + H(+). It catalyses the reaction L-glutamine + H2O = L-glutamate + NH4(+). The protein operates within cofactor biosynthesis; pyridoxal 5'-phosphate biosynthesis. Functionally, catalyzes the hydrolysis of glutamine to glutamate and ammonia as part of the biosynthesis of pyridoxal 5'-phosphate. The resulting ammonia molecule is channeled to the active site of PdxS. The chain is Pyridoxal 5'-phosphate synthase subunit PdxT from Saccharolobus islandicus (strain Y.G.57.14 / Yellowstone #1) (Sulfolobus islandicus).